An 899-amino-acid polypeptide reads, in one-letter code: RNA-binding motif protein 25 (899 aa).

Positions Met1 to Ser20 are enriched in polar residues. The tract at residues Met1–Gly112 is disordered. Residues Ile26–Gln63 are compositionally biased toward pro residues. In terms of domain architecture, RRM spans Thr204–Ala281. 2 disordered regions span residues Lys298–Leu572 and Gly611–Gly778. 2 stretches are compositionally biased toward basic and acidic residues: residues Glu317 to Ile340 and Glu354 to Lys372. Pro residues predominate over residues Pro375–Ala384. Basic and acidic residues predominate over residues Trp430–Lys505. Positions Asn434–Asp578 form a coiled coil. Positions Tyr515–Asp524 are enriched in acidic residues. The short motif at Ser526–Ala533 is the Nuclear localization signal 1 element. Over residues Ala533 to Glu568 the composition is skewed to basic and acidic residues. Positions Gly626–Ser640 are enriched in polar residues. 2 stretches are compositionally biased toward basic and acidic residues: residues Pro723 to Gln733 and Asp740 to Gly778. A Nuclear localization signal 2 motif is present at residues Ser735–Ala742. The PWI domain maps to Glu802–Ala899.

In terms of assembly, specifically associates with functional splicing complexes. Associates with exon junction complex (EJC) proteins. Post-translationally, phosphorylated; the phosphorylation level is repressed by abscisic acid (ABA).

It localises to the nucleus. Its function is as follows. RNA-binding protein that acts as a regulator of alternative pre-mRNA splicing. Negative regulator of responses to abscisic acid (ABA), including in early development. The chain is RNA-binding motif protein 25 from Arabidopsis thaliana (Mouse-ear cress).